A 518-amino-acid polypeptide reads, in one-letter code: Subtilisin-like serine protease Cla h 9.0101 (518 aa).

The N-terminal stretch at Met1 to Ala16 is a signal peptide. Residues Ser17–Gly138 constitute a propeptide, removed in mature form. One can recognise an Inhibitor I9 domain in the interval Tyr44–Val136. A Peptidase S8 domain is found at Pro148–Val454. Catalysis depends on charge relay system residues Asp184 and His216. The tract at residues Arg244–Asp298 is igE-binding. Residues Asn246 and Asn286 are each glycosylated (N-linked (GlcNAc...) asparagine). Ser382 acts as the Charge relay system in catalysis. The N-linked (GlcNAc...) asparagine glycan is linked to Asn449. Residues Lys460–Glu518 constitute a propeptide, removed in mature form.

Belongs to the peptidase S8 family.

Its function is as follows. Serine protease. The polypeptide is Subtilisin-like serine protease Cla h 9.0101 (Davidiella tassiana (Mycosphaerella tassiana)).